The following is an 876-amino-acid chain: Neurotrypsin (876 aa).

An N-terminal signal peptide occupies residues 1 to 20; it reads MTLARFVLALMLGALPEVVG. Asn26 carries an N-linked (GlcNAc...) asparagine glycan. Residues 29-89 are disordered; the sequence is LHHSHRHSPP…ALQAGHTPRP (61 aa). Positions 43–54 are enriched in low complexity; it reads YPSYYLPTQQRP. Positions 57–72 are enriched in pro residues; it reads TRPPPPLPRFPRPPRA. The 73-residue stretch at 94-166 folds into the Kringle domain; sequence CPAGEPWVSV…GKVDWGYCDC (73 aa). 20 disulfide bridges follow: Cys94–Cys166, Cys110–Cys150, Cys139–Cys164, Cys196–Cys260, Cys209–Cys270, Cys240–Cys250, Cys306–Cys370, Cys319–Cys380, Cys350–Cys360, Cys413–Cys476, Cys426–Cys486, Cys456–Cys466, Cys526–Cys590, Cys539–Cys600, Cys570–Cys580, Cys620–Cys751, Cys662–Cys678, Cys766–Cys832, Cys795–Cys809, and Cys822–Cys851. 4 SRCR domains span residues 171–272, 281–382, 388–488, and 501–602; these read VRLR…TCSF, IRLA…SCTP, IRLA…ACYP, and VRLM…ICDY. The zymogen activation region stretch occupies residues 620-631; sequence CGLRLLHRRQKR. The Peptidase S1 domain occupies 632 to 875; sequence IIGGKNSLRG…FVPWIKSVTK (244 aa). His677 functions as the Charge relay system in the catalytic mechanism. Asn684 carries N-linked (GlcNAc...) asparagine glycosylation. Residue Asp727 is the Charge relay system of the active site. The Charge relay system role is filled by Ser826.

This sequence belongs to the peptidase S1 family.

It localises to the secreted. Plays a role in neuronal plasticity and the proteolytic action may subserve structural reorganizations associated with learning and memory operations. This chain is Neurotrypsin (PRSS12), found in Gorilla gorilla gorilla (Western lowland gorilla).